A 706-amino-acid chain; its full sequence is Integrator complex subunit 13 (706 aa).

The tract at residues 564–603 is disordered; it reads PPEEEERKKRGRKREDKEDKSEKAVKDYEQEKSWQDSERL. Positions 567 to 622 form a coiled coil; that stretch reads EEERKKRGRKREDKEDKSEKAVKDYEQEKSWQDSERLKGILERGKEELAEAEIIKD. Residues 572–582 carry the Nuclear localization signal (NLS) motif; the sequence is KRGRKREDKED. Residue Lys-611 forms a Glycyl lysine isopeptide (Lys-Gly) (interchain with G-Cter in SUMO2) linkage. Over residues 615-636 the composition is skewed to basic and acidic residues; sequence AEAEIIKDSPDSPEPPNKKPLV. The disordered stretch occupies residues 615–650; it reads AEAEIIKDSPDSPEPPNKKPLVEMDETPQVEKSKGP. 3 positions are modified to phosphoserine: Ser-623, Ser-626, and Ser-678. The tract at residues 649–694 is cleavage module binding motif (CMBM); the sequence is GPVSLLSLWSNRINTANSRKHQEFAGRLNSVNNRAELYQHLKEENG.

Belongs to the Integrator subunit 13 family. In terms of assembly, component of the Integrator complex, composed of core subunits INTS1, INTS2, INTS3, INTS4, INTS5, INTS6, INTS7, INTS8, INTS9/RC74, INTS10, INTS11/CPSF3L, INTS12, INTS13, INTS14 and INTS15. The core complex associates with protein phosphatase 2A subunits PPP2CA and PPP2R1A, to form the Integrator-PP2A (INTAC) complex. INTS13 is part of the tail subcomplex, composed of INTS10, INTS13, INTS14 and INTS15. Interacts with transcription factors ZNF609 and ZNF655. Interacts with PAFAH1B1; this interaction may be required for proper recruitment of dynein complexes to the nuclear envelope at prophase. As to expression, widely expressed. Tends to be up-regulated in seminomas compared to normal testis.

The protein resides in the nucleus. Its subcellular location is the cytoplasm. In terms of biological role, component of the integrator complex, a multiprotein complex that terminates RNA polymerase II (Pol II) transcription in the promoter-proximal region of genes. The integrator complex provides a quality checkpoint during transcription elongation by driving premature transcription termination of transcripts that are unfavorably configured for transcriptional elongation: the complex terminates transcription by (1) catalyzing dephosphorylation of the C-terminal domain (CTD) of Pol II subunit POLR2A/RPB1 and SUPT5H/SPT5, (2) degrading the exiting nascent RNA transcript via endonuclease activity and (3) promoting the release of Pol II from bound DNA. The integrator complex is also involved in terminating the synthesis of non-coding Pol II transcripts, such as enhancer RNAs (eRNAs), small nuclear RNAs (snRNAs), telomerase RNAs and long non-coding RNAs (lncRNAs). Within the integrator complex, INTS13 is part of the integrator tail module and acts as a platform for the recruitment of transcription factors at promoters. At prophase, mediates recruitment of cytoplasmic dynein to the nuclear envelope, a step important for proper centrosome-nucleus coupling. At G2/M phase, may be required for proper spindle formation and execution of cytokinesis. The polypeptide is Integrator complex subunit 13 (Homo sapiens (Human)).